Consider the following 299-residue polypeptide: ATP phosphoribosyltransferase (299 aa).

This sequence belongs to the ATP phosphoribosyltransferase family. Long subfamily. Equilibrium between an active dimeric form, an inactive hexameric form and higher aggregates. Interconversion between the various forms is largely reversible and is influenced by the natural substrates and inhibitors of the enzyme. Mg(2+) serves as cofactor.

It is found in the cytoplasm. The catalysed reaction is 1-(5-phospho-beta-D-ribosyl)-ATP + diphosphate = 5-phospho-alpha-D-ribose 1-diphosphate + ATP. It participates in amino-acid biosynthesis; L-histidine biosynthesis; L-histidine from 5-phospho-alpha-D-ribose 1-diphosphate: step 1/9. Feedback inhibited by histidine. In terms of biological role, catalyzes the condensation of ATP and 5-phosphoribose 1-diphosphate to form N'-(5'-phosphoribosyl)-ATP (PR-ATP). Has a crucial role in the pathway because the rate of histidine biosynthesis seems to be controlled primarily by regulation of HisG enzymatic activity. The polypeptide is ATP phosphoribosyltransferase (Edwardsiella ictaluri (strain 93-146)).